The sequence spans 153 residues: Small ribosomal subunit protein uS5c (153 aa).

The S5 DRBM domain maps to 11-74 (WQERVIQIRR…VDAKKQLINI (64 aa)).

This sequence belongs to the universal ribosomal protein uS5 family. Part of the 30S ribosomal subunit. Contacts protein S4.

Its subcellular location is the plastid. It is found in the chloroplast. Functionally, with S4 and S12 plays an important role in translational accuracy. The protein is Small ribosomal subunit protein uS5c (rps5) of Cyanidioschyzon merolae (strain NIES-3377 / 10D) (Unicellular red alga).